A 220-amino-acid chain; its full sequence is MLHLIIADSELELVPKELQNHPSIISHAKRRFKKPEEILLDSTYHHTALKSLKDGERRGRPDIVHLCLINALESILNKEGKLRVYVHTRNNEVIYIKPETRLPRNYNRFVGLMESLFKNRVIPKDLALLRIENKTLSEIIGDIGPDAVFIMHENGVLMSPQSFGRKLNEYISPAVIVGGFPHGDFLSVLEGEKISIYKEPLMAWSVVNEVLINYEGSLLW.

S-adenosyl-L-methionine contacts are provided by residues glycine 178, glycine 183, and 196 to 201; that span reads IYKEPL.

It belongs to the class IV-like SAM-binding methyltransferase superfamily. RNA methyltransferase NEP1 family. As to quaternary structure, homodimer.

The catalysed reaction is a pseudouridine in rRNA + S-adenosyl-L-methionine = an N(1)-methylpseudouridine in rRNA + S-adenosyl-L-homocysteine + H(+). In terms of biological role, methyltransferase involved in ribosomal biogenesis. Specifically catalyzes the N1-methylation of the pseudouridine corresponding to position 914 in M.jannaschii 16S rRNA. The sequence is that of Ribosomal RNA small subunit methyltransferase Nep1 from Thermococcus sibiricus (strain DSM 12597 / MM 739).